A 105-amino-acid chain; its full sequence is V-type ATP synthase subunit F (105 aa).

The protein belongs to the V-ATPase F subunit family.

Its function is as follows. Produces ATP from ADP in the presence of a proton gradient across the membrane. The sequence is that of V-type ATP synthase subunit F from Fusobacterium nucleatum subsp. nucleatum (strain ATCC 25586 / DSM 15643 / BCRC 10681 / CIP 101130 / JCM 8532 / KCTC 2640 / LMG 13131 / VPI 4355).